A 238-amino-acid chain; its full sequence is Ribonuclease PH (238 aa).

Residues Arg86 and 124 to 126 contribute to the phosphate site; that span reads GTR.

The protein belongs to the RNase PH family. In terms of assembly, homohexameric ring arranged as a trimer of dimers.

The enzyme catalyses tRNA(n+1) + phosphate = tRNA(n) + a ribonucleoside 5'-diphosphate. In terms of biological role, phosphorolytic 3'-5' exoribonuclease that plays an important role in tRNA 3'-end maturation. Removes nucleotide residues following the 3'-CCA terminus of tRNAs; can also add nucleotides to the ends of RNA molecules by using nucleoside diphosphates as substrates, but this may not be physiologically important. Probably plays a role in initiation of 16S rRNA degradation (leading to ribosome degradation) during starvation. The chain is Ribonuclease PH from Anaeromyxobacter sp. (strain Fw109-5).